The primary structure comprises 185 residues: MSDDIKVLGISGSLRSGSYNSAALQEAIGLVPPGMSIELADISGIPLYNEDVYALGFPPAVERFREQIRAADALLFATPEYNYSMAGVLKNAIDWASRPPEQPFSGKPAAILGASAGRFGTARAQYHLRQTLVFLDVHPLNKPEVMISSAQNAFDAQGRLLDDKARELIQQQLQALQLWVRRLRG.

Residues 13 to 20 (SLRSGSYN) and 81 to 83 (YNY) each bind FMN. 115 to 122 (SAGRFGTA) is an NAD(+) binding site.

Belongs to the SsuE family. As to quaternary structure, homodimer. FMN is required as a cofactor.

In terms of biological role, has NAD(P)H-dependent FMN reductase activity. The sequence is that of NAD(P)H-dependent FMN reductase PA1204 from Pseudomonas aeruginosa (strain ATCC 15692 / DSM 22644 / CIP 104116 / JCM 14847 / LMG 12228 / 1C / PRS 101 / PAO1).